A 306-amino-acid chain; its full sequence is Heme A synthase (306 aa).

The Cytoplasmic portion of the chain corresponds to 1–5; that stretch reads MKALR. The chain crosses the membrane as a helical span at residues 6–26; that stretch reads AVSLANTAVMLLAVLWGAWVT. At 27–56 the chain is on the extracellular side; the sequence is SSDSGDGCGASWPLCKGTFMPDWDYAAIVE. Cysteine 34 and cysteine 41 are oxidised to a cystine. Glutamate 56 is an active-site residue. Residues 57 to 77 form a helical membrane-spanning segment; sequence FGHRVVSALAGLLSVAVLVWV. Histidine 59 lines the heme o pocket. Over 78 to 89 the chain is Cytoplasmic; it reads ARVRPSETRLKR. A helical membrane pass occupies residues 90 to 110; the sequence is LAFGTFFFVVLQGGLGAAAVL. Residues 111 to 116 are Extracellular-facing; sequence RPQPDL. Residues 117 to 137 form a helical membrane-spanning segment; that stretch reads VMALHFGFSLLCFTFALLVTV. Histidine 121 contributes to the heme o binding site. At 138–164 the chain is on the cytoplasmic side; the sequence is ALGQGERAAFQRPDVSAQPVAPGLRTQ. Residues 165–185 traverse the membrane as a helical segment; sequence IWGLAVYTYLVVYLGAYVRHL. Residues 186 to 206 are Extracellular-facing; that stretch reads GASMACTGWPLCNGELIPPLY. A disulfide bridge connects residues cysteine 191 and cysteine 197. A helical membrane pass occupies residues 207-227; it reads GPVGANFAHRLGAALAVVLVL. Histidine 215 contributes to the heme b binding site. At 228–247 the chain is on the cytoplasmic side; it reads RLWWTARRLTERDDLRRGAA. A helical transmembrane segment spans residues 248–268; the sequence is WALALMAAQVASGALFPLGYL. Residues 269-277 lie on the Extracellular side of the membrane; it reads NLLTQLLHT. Histidine 276 contacts heme b. The chain crosses the membrane as a helical span at residues 278–298; it reads GLITGFWGVLSYLCYLTLPVG. The Cytoplasmic portion of the chain corresponds to 299-306; the sequence is RETVAVSA.

It belongs to the COX15/CtaA family. Type 1 subfamily. Interacts with CtaB. Requires heme b as cofactor.

It localises to the cell membrane. It catalyses the reaction Fe(II)-heme o + 2 A + H2O = Fe(II)-heme a + 2 AH2. Its pathway is porphyrin-containing compound metabolism; heme A biosynthesis; heme A from heme O: step 1/1. In terms of biological role, catalyzes the conversion of heme O to heme A by two successive hydroxylations of the methyl group at C8. The first hydroxylation forms heme I, the second hydroxylation results in an unstable dihydroxymethyl group, which spontaneously dehydrates, resulting in the formyl group of heme A. The protein is Heme A synthase of Symbiobacterium thermophilum (strain DSM 24528 / JCM 14929 / IAM 14863 / T).